A 1976-amino-acid chain; its full sequence is Myosin-10 (1976 aa).

Residue R18 is modified to Omega-N-methylarginine. Residues 31–81 (TAKKLVWIPSERHGFEAASIKEERGDEVLVELAENGKKAMVNKDDIQKMNP) form the Myosin N-terminal SH3-like domain. Positions 85 to 783 (SKVEDMAELT…VLAHLEEERD (699 aa)) constitute a Myosin motor domain. Residue 178–185 (GESGAGKT) coordinates ATP. K442 carries the post-translational modification N6-acetyllysine. The actin-binding stretch occupies residues 661–683 (LTKLMATLRNTNPNFVRCIIPNH). The IQ domain occupies 786-815 (ITDIIIFFQAVCRGYLARKAFAKKQQQLSA). The stretch at 845 to 1976 (LQVTRQEEEL…INETQPPQSE (1132 aa)) forms a coiled coil. The disordered stretch occupies residues 1126–1149 (DFESEKASRNKAEKQKRDLSEELE). Residues 1129 to 1149 (SEKASRNKAEKQKRDLSEELE) are compositionally biased toward basic and acidic residues. S1145 carries the post-translational modification Phosphoserine. K1241, K1301, and K1645 each carry N6-acetyllysine. Disordered stretches follow at residues 1697 to 1718 (ASSE…DEIA) and 1874 to 1976 (KANA…PQSE). A compositionally biased stretch (basic and acidic residues) spans 1698–1708 (SSERARRHAEQ). R1930 bears the Omega-N-methylarginine mark. 4 positions are modified to phosphoserine: S1935, S1937, S1938, and S1939. R1940 carries the post-translational modification Omega-N-methylarginine. S1952 and S1956 each carry phosphoserine. T1960 is subject to Phosphothreonine. A compositionally biased stretch (polar residues) spans 1967–1976 (INETQPPQSE). The residue at position 1975 (S1975) is a Phosphoserine.

The protein belongs to the TRAFAC class myosin-kinesin ATPase superfamily. Myosin family. As to quaternary structure, myosin is a hexameric protein that consists of 2 heavy chain subunits (MHC), 2 alkali light chain subunits (MLC) and 2 regulatory light chain subunits (MLC-2). Interacts with PLEKHG6. Interacts with ECPAS. Interacts with KIF26B. Interacts with LARP6. Interacts with MCC. Interacts with CFAP95. Phosphorylated by ABL2.

It localises to the cell projection. The protein resides in the lamellipodium. Its function is as follows. Cellular myosin that appears to play a role in cytokinesis, cell shape, and specialized functions such as secretion and capping. Involved with LARP6 in the stabilization of type I collagen mRNAs for CO1A1 and CO1A2. During cell spreading, plays an important role in cytoskeleton reorganization, focal contacts formation (in the central part but not the margins of spreading cells), and lamellipodial extension; this function is mechanically antagonized by MYH9. The protein is Myosin-10 (MYH10) of Bos taurus (Bovine).